We begin with the raw amino-acid sequence, 302 residues long: Probable alpha-L-glutamate ligase (302 aa).

Residues 104–287 (LQLLSRKGVG…VAGLLIKFIE (184 aa)) enclose the ATP-grasp domain. Residues lysine 141, 178–179 (EY), aspartate 187, and 211–213 (RSN) contribute to the ATP site. 3 residues coordinate Mg(2+): aspartate 248, glutamate 260, and asparagine 262. Residues aspartate 248, glutamate 260, and asparagine 262 each contribute to the Mn(2+) site.

The protein belongs to the RimK family. Mg(2+) is required as a cofactor. Mn(2+) serves as cofactor.

The sequence is that of Probable alpha-L-glutamate ligase from Alcanivorax borkumensis (strain ATCC 700651 / DSM 11573 / NCIMB 13689 / SK2).